We begin with the raw amino-acid sequence, 226 residues long: Ribonuclease 3 (226 aa).

In terms of domain architecture, RNase III spans 6-128; that stretch reads INRLQRKLGY…LIGGVFLDSD (123 aa). A Mg(2+)-binding site is contributed by E41. Residue D45 is part of the active site. 2 residues coordinate Mg(2+): D114 and E117. E117 is an active-site residue. The DRBM domain maps to 155 to 225; it reads DPKTRLQEYL…AEQALKQLEL (71 aa).

Belongs to the ribonuclease III family. As to quaternary structure, homodimer. The cofactor is Mg(2+).

It localises to the cytoplasm. The catalysed reaction is Endonucleolytic cleavage to 5'-phosphomonoester.. Digests double-stranded RNA. Involved in the processing of primary rRNA transcript to yield the immediate precursors to the large and small rRNAs (23S and 16S). Processes some mRNAs, and tRNAs when they are encoded in the rRNA operon. Processes pre-crRNA and tracrRNA of type II CRISPR loci if present in the organism. This is Ribonuclease 3 from Yersinia pseudotuberculosis serotype O:1b (strain IP 31758).